The chain runs to 230 residues: uncharacterized protein (230 aa).

Catalysis depends on charge relay system residues Ser-124 and His-158.

This sequence belongs to the peptidase S51 family.

This is an uncharacterized protein from Bacillus subtilis (strain 168).